A 381-amino-acid polypeptide reads, in one-letter code: L-lactate dehydrogenase (381 aa).

The FMN hydroxy acid dehydrogenase domain maps to 1–380 (MIISSASDYR…KPEALVDLSK (380 aa)). Residue tyrosine 24 participates in substrate binding. FMN is bound by residues serine 106 and glutamine 127. Residue tyrosine 129 participates in substrate binding. An FMN-binding site is contributed by threonine 155. Residue arginine 164 participates in substrate binding. Lysine 251 is a binding site for FMN. Residue histidine 275 is the Proton acceptor of the active site. Arginine 278 contacts substrate. Residue 306 to 330 (DSGIRNGLDIVRMLALGADATMLGR) coordinates FMN.

It belongs to the FMN-dependent alpha-hydroxy acid dehydrogenase family. The cofactor is FMN.

The protein localises to the cell inner membrane. It carries out the reaction (S)-lactate + A = pyruvate + AH2. Catalyzes the conversion of L-lactate to pyruvate. Is coupled to the respiratory chain. The chain is L-lactate dehydrogenase from Haemophilus influenzae (strain PittEE).